The following is a 147-amino-acid chain: Hemoglobin subunit gamma (147 aa).

Residues 3-147 enclose the Globin domain; it reads NFTAEDKAAI…VASALASRYH (145 aa). H64 and H93 together coordinate heme b.

This sequence belongs to the globin family. Heterotetramer of two alpha chains and two gamma chains in fetal hemoglobin (Hb F). As to expression, red blood cells.

Its function is as follows. Gamma chains make up the fetal hemoglobin F, in combination with alpha chains. This Alouatta seniculus (Red howler monkey) protein is Hemoglobin subunit gamma (HBG).